Reading from the N-terminus, the 450-residue chain is Glucose-6-phosphate isomerase (450 aa).

Catalysis depends on E291, which acts as the Proton donor. Active-site residues include H312 and K426.

This sequence belongs to the GPI family.

The protein resides in the cytoplasm. It catalyses the reaction alpha-D-glucose 6-phosphate = beta-D-fructose 6-phosphate. The protein operates within carbohydrate biosynthesis; gluconeogenesis. Its pathway is carbohydrate degradation; glycolysis; D-glyceraldehyde 3-phosphate and glycerone phosphate from D-glucose: step 2/4. Catalyzes the reversible isomerization of glucose-6-phosphate to fructose-6-phosphate. The sequence is that of Glucose-6-phosphate isomerase from Clostridium botulinum (strain Langeland / NCTC 10281 / Type F).